Consider the following 490-residue polypeptide: Histone-lysine N-methyltransferase SMYD1 (490 aa).

The 247-residue stretch at 7–253 folds into the SET domain; the sequence is ENVEVFTAEG…EGEELTVSYI (247 aa). An S-adenosyl-L-methionine-binding site is contributed by 17–19; it reads KGR. 8 residues coordinate Zn(2+): Cys-52, Cys-55, Cys-65, Cys-68, Cys-74, Cys-78, His-86, and Cys-90. The MYND-type zinc finger occupies 52 to 90; the sequence is CHTCFKRQEKLHRCGQCKFAHYCDRTCQKDAWLNHKNEC. S-adenosyl-L-methionine contacts are provided by residues His-135 and 205–206; that span reads NH. Cys-208 contacts Zn(2+). 270 to 272 is a binding site for S-adenosyl-L-methionine; it reads YYF. Zn(2+)-binding residues include Cys-274, Cys-276, and Cys-279.

It belongs to the class V-like SAM-binding methyltransferase superfamily. Interacts with HDAC1, HDAC2 and HDAC3. Interacts (via MYND-type zinc finger) with NACA isoform skNAC. As to expression, expression seems mostly restricted to heart and skeletal muscle.

Its subcellular location is the cytoplasm. It localises to the nucleus. The enzyme catalyses L-lysyl(4)-[histone H3] + 3 S-adenosyl-L-methionine = N(6),N(6),N(6)-trimethyl-L-lysyl(4)-[histone H3] + 3 S-adenosyl-L-homocysteine + 3 H(+). Methylates histone H3 at 'Lys-4' (H3K4me), seems able to perform both mono-, di-, and trimethylation. Acts as a transcriptional repressor. Essential for cardiomyocyte differentiation and cardiac morphogenesis. The chain is Histone-lysine N-methyltransferase SMYD1 (SMYD1) from Homo sapiens (Human).